A 159-amino-acid chain; its full sequence is Large ribosomal subunit protein mL43 (159 aa).

Residues 123-159 are disordered; sequence SPSIQGQWHPFTNKPTALGGLRPREVQNPAPTQRPAQ.

The protein belongs to the mitochondrion-specific ribosomal protein mL43 family. Component of the mitochondrial ribosome large subunit (39S) which comprises a 16S rRNA and about 50 distinct proteins.

Its subcellular location is the mitochondrion. The protein is Large ribosomal subunit protein mL43 (MRPL43) of Bos taurus (Bovine).